The chain runs to 113 residues: Flagellar hook-basal body complex protein FliE (113 aa).

This sequence belongs to the FliE family.

The protein resides in the bacterial flagellum basal body. This chain is Flagellar hook-basal body complex protein FliE, found in Rhizobium leguminosarum bv. trifolii (strain WSM2304).